The chain runs to 296 residues: Arginase (296 aa).

Residues histidine 97, aspartate 120, histidine 122, and aspartate 124 each contribute to the Mn(2+) site. Substrate-binding positions include 122–126 (HGDLN), 133–135 (SGN), and aspartate 176. Aspartate 223 and aspartate 225 together coordinate Mn(2+). Substrate-binding residues include threonine 237 and glutamate 268.

This sequence belongs to the arginase family. Requires Mn(2+) as cofactor.

The enzyme catalyses L-arginine + H2O = urea + L-ornithine. The protein operates within nitrogen metabolism; urea cycle; L-ornithine and urea from L-arginine: step 1/1. Its function is as follows. Involved in the catabolism of arginine. This is Arginase from Bacillus subtilis (strain 168).